Reading from the N-terminus, the 156-residue chain is Ribosomal RNA large subunit methyltransferase H (156 aa).

S-adenosyl-L-methionine contacts are provided by residues Leu-73, Gly-104, and 123–128; that span reads IGPLTL.

The protein belongs to the RNA methyltransferase RlmH family. As to quaternary structure, homodimer.

The protein resides in the cytoplasm. It carries out the reaction pseudouridine(1915) in 23S rRNA + S-adenosyl-L-methionine = N(3)-methylpseudouridine(1915) in 23S rRNA + S-adenosyl-L-homocysteine + H(+). In terms of biological role, specifically methylates the pseudouridine at position 1915 (m3Psi1915) in 23S rRNA. The chain is Ribosomal RNA large subunit methyltransferase H from Stenotrophomonas maltophilia (strain K279a).